A 426-amino-acid chain; its full sequence is MKLQKPKGTQDILPGESAKWQYVENVIRNLFKQYHYDEIRTPMFEHYEVISRSVGDTTDIVTKEMYDFHDKGDRHITLRPEGTAPVVRSYVENKLFAPEVQKPTKMYYIGSMFRYERPQAGRLREFHQVGVECFGSNNPATDVETIAMGHHLFEDLGIKNVKLHLNSLGSPESRQAYRQALIDYLTPIREQLSKDSQRRLNENPLRVLDSKEPEDKLAVENAPSILDYLDESSQAHFDAVCHMLDALNIPYIIDTNMVRGLDYYNHTIFEFITEIEDNELTICAGGRYDGLVSYFGGPETPAFGFGLGLERLLLILGKQGIPLPIENTIDLYIAVLGSEANLAALDLAQSIRHQGFKVERDYLGRKIKAQFKSADTFNAKVIMTLGSSEVDSREVSLKNNQTRQEVKVSFENIKTGFSSVLKQLGL.

The protein belongs to the class-II aminoacyl-tRNA synthetase family. In terms of assembly, homodimer.

Its subcellular location is the cytoplasm. It carries out the reaction tRNA(His) + L-histidine + ATP = L-histidyl-tRNA(His) + AMP + diphosphate + H(+). This Streptococcus agalactiae serotype Ia (strain ATCC 27591 / A909 / CDC SS700) protein is Histidine--tRNA ligase.